Here is a 263-residue protein sequence, read N- to C-terminus: uncharacterized protein (263 aa).

7 consecutive transmembrane segments (helical) span residues 1–21 (MLVI…ILCQ), 38–58 (LFLL…HYCY), 82–102 (IPIS…CMMV), 118–138 (GISI…IFTY), 151–171 (GKFG…ANLL), 196–216 (FALI…VIPT), and 230–250 (FWVK…VQYV).

The protein localises to the membrane. This is an uncharacterized protein from Saccharomyces cerevisiae (strain ATCC 204508 / S288c) (Baker's yeast).